Reading from the N-terminus, the 90-residue chain is Protein S100-A6 (90 aa).

2 EF-hand domains span residues 12 to 47 and 48 to 83; these read LIGIFHKYSGKEGDKHTLSKKELKELIQKELTIGSK and LQDAEIVKLMDDLDRNKDQEVNFQEYITFLGALAMI. Thr28 and Glu33 together coordinate Ca(2+). Lys40 is subject to N6-acetyllysine. Ser46 is modified (phosphoserine). Lys47 carries the N6-acetyllysine; alternate modification. An N6-succinyllysine; alternate modification is found at Lys47. Ca(2+) is bound by residues Asp61, Asn63, Asp65, Glu67, and Glu72.

Belongs to the S-100 family. Homodimer; head to tail assembly of 2 subunits. Interacts with CACYBP in a calcium-dependent manner. Interacts with ANXA2 and ANXA11 (via N-terminus). Interacts with SUGT1. Interacts with TP53; has higher affinity for TP53 that is phosphorylated on its N-terminal domain, and lower affinity for TP53 that is phosphorylated on its C-terminal domain. Interacts with tropomyosin. Interacts with FKBP4. Interacts with PPP5C (via TPR repeats); the interaction is calcium-dependent and modulates PPP5C activity. Interacts with TPPP; this interaction inhibits TPPP dimerization.

The protein resides in the nucleus envelope. It localises to the cytoplasm. Its subcellular location is the cell membrane. In terms of biological role, may function as calcium sensor and modulator, contributing to cellular calcium signaling. May function by interacting with other proteins, such as TPR-containing proteins, and indirectly play a role in many physiological processes such as the reorganization of the actin cytoskeleton and in cell motility. Binds 2 calcium ions. Calcium binding is cooperative. The sequence is that of Protein S100-A6 (S100A6) from Oryctolagus cuniculus (Rabbit).